The following is a 2195-amino-acid chain: COPII coat assembly protein SEC16 (2195 aa).

Basic residues predominate over residues 1 to 20 (MTPEAKKRKNQKKKLKQKQK). The segment at 1 to 112 (MTPEAKKRKN…ADSNDLPDNS (112 aa)) is disordered. Composition is skewed to basic and acidic residues over residues 21 to 32 (KAAEKAASHSEE) and 49 to 59 (SVNRTESDIAS). S28 is subject to Phosphoserine. Positions 66–79 (VSSSTNISPANETQ) are enriched in polar residues. S73 is modified (phosphoserine). A compositionally biased stretch (basic and acidic residues) spans 86–102 (QELHHKLLNDSDQHDIT). The residue at position 144 (S144) is a Phosphoserine. 5 disordered regions span residues 201–233 (PSDG…INDD), 247–381 (NVLP…FHGH), 436–555 (TQSS…KASR), 594–616 (GTPN…VKDN), and 643–708 (SKKG…QSPV). Polar residues predominate over residues 210-219 (ELSSGDTPTH). Residues 257 to 276 (EDERLKLETHVSTEEKKQDI) are compositionally biased toward basic and acidic residues. Polar residues predominate over residues 282–292 (AENLFTSSTEP). At S313 the chain carries Phosphoserine. The segment covering 314 to 329 (DQKVPWEEDVKKDFHN) has biased composition (basic and acidic residues). The segment covering 330–341 (ENTNNTQESAPN) has biased composition (polar residues). Basic and acidic residues-rich tracts occupy residues 342 to 381 (TDDR…FHGH) and 450 to 479 (STDK…EKLP). Phosphoserine is present on residues S472 and S483. Over residues 489 to 501 (SGKTENSMQTSTE) the composition is skewed to polar residues. Residues 512 to 533 (ENDDDLLDDDDSFLASSEEEDT) are compositionally biased toward acidic residues. 2 stretches are compositionally biased toward polar residues: residues 534–545 (VPNTDNTTNLTS) and 594–604 (GTPNQQVSVPN). Residue T595 is modified to Phosphothreonine. A phosphoserine mark is found at S607, S660, S663, S665, S674, S678, S681, S701, S704, S706, S759, S762, S765, S768, S843, S1511, S1515, S1578, S1602, S1603, S1611, and S1617. Residues 657 to 666 (RFGSGNSFSS) show a composition bias toward polar residues. Residues 693–708 (EPRSSRTNSAISQSPV) show a composition bias toward polar residues. 2 disordered regions span residues 1656-1731 (VHET…TVNP) and 1751-1804 (GTDA…QDEN). Positions 1673–1682 (MPEDESHTSH) are enriched in basic and acidic residues. Polar residues-rich tracts occupy residues 1683–1693 (DNSNADQNTLK) and 1775–1786 (ENISKSASSAYL). 2 positions are modified to phosphoserine: S1778 and S1875. Positions 1917–1936 (SFELSESTSQAQSNGNVASE) are disordered. Phosphoserine is present on residues S1973, S1986, and S1992. The disordered stretch occupies residues 1976 to 2031 (DKYNDVIEDESDDDNMSTDEAKNRKEEKKNVNMKKETKPSNKDIDDKSNGWFGWLK). Acidic residues predominate over residues 1981–1992 (VIEDESDDDNMS). Positions 1994 to 2023 (DEAKNRKEEKKNVNMKKETKPSNKDIDDKS) are enriched in basic and acidic residues. Phosphothreonine is present on T2049. The segment covering 2054–2072 (EKLKRWVNKDATEEEKQKI) has biased composition (basic and acidic residues). Positions 2054–2195 (EKLKRWVNKD…GYVNVMDNIQ (142 aa)) are disordered. S2130 bears the Phosphoserine mark. Pro residues predominate over residues 2131 to 2143 (PTGPNPNNSPSPS).

This sequence belongs to the SEC16 family. Interacts with SEC23, SEC31 and SED4.

It is found in the endoplasmic reticulum membrane. Functionally, involved in the initiation of assembly of the COPII coat required for the formation of transport vesicles from the endoplasmic reticulum (ER) and the selection of cargo molecules. Also involved in autophagy. In Saccharomyces cerevisiae (strain ATCC 204508 / S288c) (Baker's yeast), this protein is COPII coat assembly protein SEC16 (SEC16).